A 291-amino-acid chain; its full sequence is Popeye domain-containing protein 3 (291 aa).

Asn-4 carries N-linked (GlcNAc...) asparagine glycosylation. 3 helical membrane-spanning segments follow: residues 27 to 44 (GAIYHLASILFVVGFMGG), 48 to 70 (FGLLYVFSLLGLGFLSSAVWAWV), and 77 to 99 (IFSWNFVLFVICFMQFVHIAYQV).

The protein belongs to the popeye family. As to expression, expressed in cardiac and skeletal muscle.

The protein resides in the membrane. May play a role in the maintenance of heart function mediated, at least in part, through cAMP-binding. May play a role in the regulation of KCNK2-mediated current amplitude. This chain is Popeye domain-containing protein 3 (Popdc3), found in Mus musculus (Mouse).